Reading from the N-terminus, the 296-residue chain is Protoheme IX farnesyltransferase (296 aa).

9 consecutive transmembrane segments (helical) span residues 27 to 47 (IMYL…GTIH), 48 to 68 (PLIG…AGAL), 98 to 118 (ALEC…LTVN), 120 to 140 (VSAI…TMVL), 148 to 168 (IVIG…SVTG), 175 to 195 (LLLF…LSLL), 219 to 239 (HIMG…LYVA), 242 to 262 (VLYE…AYCL), and 274 to 294 (CMGL…AIAL).

The protein belongs to the UbiA prenyltransferase family. Protoheme IX farnesyltransferase subfamily.

It is found in the cell inner membrane. It carries out the reaction heme b + (2E,6E)-farnesyl diphosphate + H2O = Fe(II)-heme o + diphosphate. It participates in porphyrin-containing compound metabolism; heme O biosynthesis; heme O from protoheme: step 1/1. Its function is as follows. Converts heme B (protoheme IX) to heme O by substitution of the vinyl group on carbon 2 of heme B porphyrin ring with a hydroxyethyl farnesyl side group. The sequence is that of Protoheme IX farnesyltransferase from Anaplasma phagocytophilum (strain HZ).